The primary structure comprises 116 residues: Tachykinin-3 (116 aa).

Positions 1–20 (MRSAMLFAAVLALSLAWTFG) are cleaved as a signal peptide. The propeptide occupies 21-79 (AACEEPQEQGGRLSKDSDLSLLPPPLLRRLYDSRSISLEGLLKVLSKASVGPKETSLPQ). Met91 is modified (methionine amide). Positions 92-116 (GKRNSQPDTPADVVEENTPSFGVLK) are disordered. Residues 95–116 (NSQPDTPADVVEENTPSFGVLK) constitute a propeptide that is removed on maturation.

The protein belongs to the tachykinin family.

The protein localises to the secreted. Tachykinins are active peptides which excite neurons, evoke behavioral responses, are potent vasodilators and secretagogues, and contract (directly or indirectly) many smooth muscles. Is a critical central regulator of gonadal function. The polypeptide is Tachykinin-3 (Tac3) (Rattus norvegicus (Rat)).